The sequence spans 914 residues: Solute carrier family 12 member 9 (914 aa).

Topologically, residues 1 to 36 (MASENSPLLAYRLLGEEGAAFPPNGAGGSGVASARK) are cytoplasmic. Ser6 is subject to Phosphoserine. A helical membrane pass occupies residues 37 to 57 (LSTFLGVVVPTVLSMFSIVVF). Topologically, residues 58 to 72 (LRIGFVVGHAGLLQA) are extracellular. The helical transmembrane segment at 73–93 (LAMLLVAYVILALTVLSVCAI) threads the bilayer. Residues 94 to 119 (ATNGAVRGGGAYFMISRTLGPEVGGS) lie on the Cytoplasmic side of the membrane. A helical transmembrane segment spans residues 120 to 140 (IGLMFYLANVCGCAVSLLGLV). The Extracellular segment spans residues 141–167 (ESILDVFGADVTGSSGIKVLPQGYGWN). The helical transmembrane segment at 168 to 188 (LLYGSLLLGLVGGVCALGAGL) threads the bilayer. The Cytoplasmic portion of the chain corresponds to 189 to 193 (YARAS). Residues 194–214 (FLTFLLVSGSLASVLVSFVAV) form a helical membrane-spanning segment. The Extracellular segment spans residues 215 to 262 (GPRNITLAPRPGTNGSSVPPRHGHFTGFNGSTLKDNLGAGYAEDYTTG). 3 N-linked (GlcNAc...) asparagine glycosylation sites follow: Asn218, Asn228, and Asn243. The helical transmembrane segment at 263-283 (AMMTFASVFAVLFNGCTGIMA) threads the bilayer. The Cytoplasmic portion of the chain corresponds to 284-297 (GANMSGELKDPSRA). A helical membrane pass occupies residues 298–318 (IPLGTIIAVAYTFFIYILLFF). Topologically, residues 319 to 338 (LSSFTCDRALLQGDYGFFRD) are extracellular. The helical transmembrane segment at 339-359 (ISLWPPLVLIGIYATALSASM) threads the bilayer. Residues 360–376 (SSLIGASRILHALAQDD) lie on the Cytoplasmic side of the membrane. The helical transmembrane segment at 377 to 399 (LFGVILAPAKVVSGGGNPWGAVL) threads the bilayer. Topologically, residues 400–416 (YSWGLVQLVLLAGKLNT) are extracellular. A helical membrane pass occupies residues 417–437 (LAAVVTVFYLVAYAAVDLSCL). Topologically, residues 438–466 (SLEWASAPNFRPTFSLFSWHTCLLGVASC) are cytoplasmic. The helical transmembrane segment at 467-487 (LLMMFLISPGAAGGSLLLMGL) threads the bilayer. Residues 488–740 (LSALLTARGG…LLRPRGGPGY (253 aa)) lie on the Extracellular side of the membrane. The interval 645-678 (PAFSEPAEGTREGGSPALSTLFPPPRAPGSPRAL) is disordered. A helical membrane pass occupies residues 741 to 761 (VDVCGLFLLQMATILSMVPAW). Residues 762 to 914 (HSARLRIFLC…GVTPVTCTDL (153 aa)) lie on the Cytoplasmic side of the membrane. Positions 843–864 (QQGRGTGGGPGGPEGRDGEEGP) are disordered. Over residues 846–855 (RGTGGGPGGP) the composition is skewed to gly residues.

This sequence belongs to the SLC12A transporter family. In terms of assembly, interacts with SLC12A1.

It is found in the cell membrane. It localises to the lysosome membrane. Its function is as follows. May be an inhibitor of SLC12A1. Seems to correspond to a subunit of a multimeric transport system and thus, additional subunits may be required for its function. May play a role in lysosomal ion flux and osmoregulation. This is Solute carrier family 12 member 9 (Slc12a9) from Rattus norvegicus (Rat).